Consider the following 485-residue polypeptide: Podocalyxin (485 aa).

Positions 1–24 (MRPTLALSALLLLQLLLLSTPSLS) are cleaved as a signal peptide. Positions 22-267 (SLSQDNGNKT…STPSSTWTSG (246 aa)) are disordered. Residues 25-386 (QDNGNKTDTS…PPEVNEDRFS (362 aa)) are Extracellular-facing. The span at 26–57 (DNGNKTDTSDITSIDQNQDKPATNQPSNATPK) shows a compositional bias: polar residues. Asn29 and Asn82 each carry an N-linked (GlcNAc...) asparagine glycan. A compositionally biased stretch (low complexity) spans 58–109 (SSVQPPTPTSISTSSPDPKATQSSNSSVTTTSDSTTDRTSSSTSTVPTTSNS). 2 stretches are compositionally biased toward polar residues: residues 110-128 (GQTV…TALP) and 135-149 (NASS…STKL). 3 N-linked (GlcNAc...) asparagine glycosylation sites follow: Asn135, Asn144, and Asn156. Residues 150 to 161 (PSTPTTNSTASP) are compositionally biased toward low complexity. Polar residues-rich tracts occupy residues 163–176 (QPVS…TTVQ), 186–228 (DNTT…QPTG), and 235–253 (SVPT…TPVV). Asn187 carries N-linked (GlcNAc...) asparagine glycosylation. The segment covering 254–267 (SQGPSTPSSTWTSG) has biased composition (low complexity). Asn287 carries N-linked (GlcNAc...) asparagine glycosylation. Residues 387 to 407 (LPLIITIVCMASFLLLVAALY) form a helical membrane-spanning segment. Topologically, residues 408–485 (GCCHQRISQR…DLDEEEDTHL (78 aa)) are cytoplasmic. Thr445 is subject to Phosphothreonine. Position 464 is a phosphoserine (Ser464). At Thr483 the chain carries Phosphothreonine.

Belongs to the podocalyxin family. In terms of assembly, monomer; when associated with the membrane raft. Oligomer; when integrated in the apical membrane. Interacts with NHERF2. Interacts (via the C-terminal PDZ-binding motif DTHL) with NHERF1 (via the PDZ domains); the interaction take place early in the secretory pathway and is necessary for its apical membrane sorting. Found in a complex with EZR, PODXL and NHERF2. Associates with the actin cytoskeleton through complex formation with EZR and NHERF2. Interacts (via the C-terminal PDZ-binding motif DTHL) with NHERF1 (via the PDZ domains); interaction is not detected in glomerular epithelium cells. Interacts (via the C-terminal PDZ-binding motif DTHL) with NHERF2 (via the PDZ 1 domain); interaction is detected in glomerular epithelium cells. Interacts with EZR. N- and O-linked glycosylated. Sialoglycoprotein. As to expression, glomerular epithelium cell (podocyte) (at protein level).

It localises to the apical cell membrane. It is found in the cell projection. The protein resides in the microvillus. The protein localises to the membrane raft. Its subcellular location is the lamellipodium. It localises to the filopodium. It is found in the ruffle. The protein resides in the membrane. In terms of biological role, involved in the regulation of both adhesion and cell morphology and cancer progression. Functions as an anti-adhesive molecule that maintains an open filtration pathway between neighboring foot processes in the podocyte by charge repulsion. Acts as a pro-adhesive molecule, enhancing the adherence of cells to immobilized ligands, increasing the rate of migration and cell-cell contacts in an integrin-dependent manner. Induces the formation of apical actin-dependent microvilli. Involved in the formation of a preapical plasma membrane subdomain to set up initial epithelial polarization and the apical lumen formation during renal tubulogenesis. Plays a role in cancer development and aggressiveness by inducing cell migration and invasion through its interaction with the actin-binding protein EZR. Affects EZR-dependent signaling events, leading to increased activities of the MAPK and PI3K pathways in cancer cells. This is Podocalyxin (Podxl) from Rattus norvegicus (Rat).